Here is a 26-residue protein sequence, read N- to C-terminus: Acetylcholine receptor subunit delta (26 aa).

It belongs to the ligand-gated ion channel (TC 1.A.9) family. Acetylcholine receptor (TC 1.A.9.1) subfamily. As to quaternary structure, pentamer of two alpha chains, and one each of the beta, delta, and gamma chains.

Its subcellular location is the postsynaptic cell membrane. The protein localises to the cell membrane. The enzyme catalyses K(+)(in) = K(+)(out). It catalyses the reaction Na(+)(in) = Na(+)(out). Its function is as follows. After binding acetylcholine, the AChR responds by an extensive change in conformation that affects all subunits and leads to opening of an ion-conducting channel across the plasma membrane. The protein is Acetylcholine receptor subunit delta (chrnd) of Electrophorus electricus (Electric eel).